The primary structure comprises 189 residues: CDP-archaeol synthase (189 aa).

The next 5 membrane-spanning stretches (helical) occupy residues 6-26 (VAIAVWAMLPAYVPNNVAVLA), 71-91 (GVVLALLLNQLQPFVAGTVGV), 96-116 (IAAAVALAFGAMLGDILASFL), 125-145 (GAAFPGVDQLDFVIVSLALTA), and 162-184 (VAIFVLTPVLHVSTNGLAYAFGL).

This sequence belongs to the CDP-archaeol synthase family. Requires Mg(2+) as cofactor.

It is found in the cell membrane. It catalyses the reaction 2,3-bis-O-(geranylgeranyl)-sn-glycerol 1-phosphate + CTP + H(+) = CDP-2,3-bis-O-(geranylgeranyl)-sn-glycerol + diphosphate. Its pathway is membrane lipid metabolism; glycerophospholipid metabolism. Functionally, catalyzes the formation of CDP-2,3-bis-(O-geranylgeranyl)-sn-glycerol (CDP-archaeol) from 2,3-bis-(O-geranylgeranyl)-sn-glycerol 1-phosphate (DGGGP) and CTP. This reaction is the third ether-bond-formation step in the biosynthesis of archaeal membrane lipids. In Natronomonas pharaonis (strain ATCC 35678 / DSM 2160 / CIP 103997 / JCM 8858 / NBRC 14720 / NCIMB 2260 / Gabara) (Halobacterium pharaonis), this protein is CDP-archaeol synthase.